A 497-amino-acid polypeptide reads, in one-letter code: Catalase-2 (497 aa).

Residues H71 and N144 contribute to the active site. Y354 is a heme binding site.

The protein belongs to the catalase family. Heme is required as a cofactor.

The catalysed reaction is 2 H2O2 = O2 + 2 H2O. Catalase involved in the oxidative stress response serving to protect cells from toxicity. For instance plays a role in defending against oxidative damage induced by excessive copper stress. Not required for maintaining normal lifespan. The sequence is that of Catalase-2 from Caenorhabditis elegans.